Reading from the N-terminus, the 829-residue chain is Probable methyltransferase PMT26 (829 aa).

Topologically, residues 1-17 (MAQPRYTRIDNRRPSSN) are cytoplasmic. The helical; Signal-anchor for type II membrane protein transmembrane segment at 18–38 (YCSTVTVVVFVALCLVGIWMM) threads the bilayer. Over 39-829 (TSSSVGPAQN…EVETLTYAIG (791 aa)) the chain is Lumenal. The disordered stretch occupies residues 55–258 (DNKDGIKKQM…TSGDLSPPGA (204 aa)). Basic and acidic residues-rich tracts occupy residues 85–143 (NEDK…DSKS), 151–160 (LDEKKDLKDN), 168–177 (TNEKQTKPET), and 187–231 (ENQK…KENT). 4 N-linked (GlcNAc...) asparagine glycosylation sites follow: asparagine 215, asparagine 247, asparagine 264, and asparagine 270. The span at 241–252 (QEGQSKNETSGD) shows a compositional bias: polar residues. The interval 271 to 291 (GSFSTQATESKNEKEAQKGSG) is disordered. A compositionally biased stretch (basic and acidic residues) spans 280–291 (SKNEKEAQKGSG). Asparagine 302, asparagine 579, asparagine 595, and asparagine 756 each carry an N-linked (GlcNAc...) asparagine glycan.

Belongs to the methyltransferase superfamily.

It is found in the golgi apparatus membrane. This chain is Probable methyltransferase PMT26, found in Arabidopsis thaliana (Mouse-ear cress).